The primary structure comprises 253 residues: Endonuclease NucS (253 aa).

This sequence belongs to the NucS endonuclease family.

It localises to the cytoplasm. Cleaves both 3' and 5' ssDNA extremities of branched DNA structures. The chain is Endonuclease NucS from Pyrococcus horikoshii (strain ATCC 700860 / DSM 12428 / JCM 9974 / NBRC 100139 / OT-3).